The sequence spans 249 residues: Methyltransferase 1 (249 aa).

It belongs to the FkbM methyltransferase family.

The protein operates within secondary metabolite biosynthesis. Methyltransferase; part of the pathway that mediates the biosynthesis of tenellin-type 2-pyridones, iron-chelating compounds involved in iron stress tolerance, competition with the natural competitor fungus Metarhizium robertsii and insect hosts infection. Methylates pyridovericin-N-O-(beta-D-glucopyranoside) produced by the UDP-glucosyltransferase GT1 to yield pyridovericin-N-O-(4-O-methyl-beta-D-glucopyranoside) (PMGP). The pathway begins with the assembly of the polyketide-amino acid backbone by the hybrid PKS-NRPS tenS with the help of the enoyl reductase tenC. These enzymes catalyze the synthesis of the pyrrolidine-2-dione intermediates pretellinin A, 11-hydropretellenin A, 12-hydropretellenin A, 13-hydropretellenin A, 14-hydropretellenin A, 12-oxopretellenin A and prototellinin D. The cytochrome P450 monooxygenase tenA then catalyzes an oxidative ring expansion of pretenellin A and 14-hydropretellenin A to form the 2-pyridone core, leading to pretenellin B and pyridovericin, respectively. The cytochrome P450 monooxygenase tenB is then required for the selective N-hydroxylation of the 2-pyridone nitrogen of yield tellinin and 15-hydroxytellenin (15-HT), respectively. The UDP-glucosyltransferase GT1 and the methyltransferase MT1, located outside the tenS gene cluster, contribute to the stepwise glycosylation and methylation of 15-HT to obtain the glycoside pyridovericin-N-O-(4-O-methyl-beta-D-glucopyranoside) (PMGP). Additional related compounds such as 1-O-methyl-15-HT, (8Z)-1-O-methyl-15-HT, and O-methyltenellin A are also produced but the enzymes involved in their biosynthesis have still to be determined. This is Methyltransferase 1 from Beauveria bassiana (strain ARSEF 2860) (White muscardine disease fungus).